The primary structure comprises 461 residues: Bifunctional protein HldE (461 aa).

Positions 1 to 312 (MLEFLSQQKP…IKSFNRVDFE (312 aa)) are ribokinase. Position 191–194 (191–194 (NKKE)) interacts with ATP. Residue Asp-259 is part of the active site. The cytidylyltransferase stretch occupies residues 334 to 461 (FTNGCFDIVH…KIIEKIKDKK (128 aa)).

It in the N-terminal section; belongs to the carbohydrate kinase PfkB family. The protein in the C-terminal section; belongs to the cytidylyltransferase family. In terms of assembly, homodimer.

It carries out the reaction D-glycero-beta-D-manno-heptose 7-phosphate + ATP = D-glycero-beta-D-manno-heptose 1,7-bisphosphate + ADP + H(+). It catalyses the reaction D-glycero-beta-D-manno-heptose 1-phosphate + ATP + H(+) = ADP-D-glycero-beta-D-manno-heptose + diphosphate. It functions in the pathway nucleotide-sugar biosynthesis; ADP-L-glycero-beta-D-manno-heptose biosynthesis; ADP-L-glycero-beta-D-manno-heptose from D-glycero-beta-D-manno-heptose 7-phosphate: step 1/4. The protein operates within nucleotide-sugar biosynthesis; ADP-L-glycero-beta-D-manno-heptose biosynthesis; ADP-L-glycero-beta-D-manno-heptose from D-glycero-beta-D-manno-heptose 7-phosphate: step 3/4. Its function is as follows. Catalyzes the phosphorylation of D-glycero-D-manno-heptose 7-phosphate at the C-1 position to selectively form D-glycero-beta-D-manno-heptose-1,7-bisphosphate. Catalyzes the ADP transfer from ATP to D-glycero-beta-D-manno-heptose 1-phosphate, yielding ADP-D-glycero-beta-D-manno-heptose. The chain is Bifunctional protein HldE from Campylobacter jejuni subsp. jejuni serotype O:6 (strain 81116 / NCTC 11828).